We begin with the raw amino-acid sequence, 337 residues long: MKTLGEFIVEKQLDFSHATGELTALLSAIKLGAKIIHRDINKAGLVDILGASGVSNIQGEDQMKLDLFANEKLKAALKARGEVAGIASEEEDDIVIFDGGRAENAKYVVLMDPLDGSSNIDVNVSVGTIFSIYRRITPFGTPITEEDFLQPGTKQVAAGYVVYGSSTMLVYTTGYGVHAFTYDPSLGVFCLSHEKVRYPATGCMYSINEGNYIKFPLGVKKYIKYCQEQDEATKRPYTSRYIGSLVADFHRNLLKGGIYIYPSTASHPQGKLRLLYECNPMAFLAEQAGGKATDGVNRILDIVPEKLHQRAPFFVGTKSMVEDAEGFIAKFPDEEAK.

Mg(2+) contacts are provided by Glu89, Asp112, Leu114, and Asp115. Substrate-binding positions include Asp115–Ser118, Asn208, Tyr241, and Lys271. Residue Glu277 coordinates Mg(2+).

This sequence belongs to the FBPase class 1 family. As to quaternary structure, homotetramer. Requires Mg(2+) as cofactor.

It is found in the cytoplasm. The catalysed reaction is beta-D-fructose 1,6-bisphosphate + H2O = beta-D-fructose 6-phosphate + phosphate. Its pathway is carbohydrate biosynthesis; gluconeogenesis. In Yersinia pseudotuberculosis serotype O:1b (strain IP 31758), this protein is Fructose-1,6-bisphosphatase class 1.